The following is a 572-amino-acid chain: NADP-dependent malic enzyme (572 aa).

Met1 is modified (N-acetylmethionine). The active-site Proton donor is the Tyr102. Arg155 lines the NADP(+) pocket. Lys173 functions as the Proton acceptor in the catalytic mechanism. The a divalent metal cation site is built by Glu245, Asp246, and Asp269. Residues Asp269 and Gly301 to Glu318 each bind NADP(+). Ser336 is modified (phosphoserine). Asn408 is an NADP(+) binding site.

This sequence belongs to the malic enzymes family. As to quaternary structure, homotetramer. The cofactor is Mg(2+). It depends on Mn(2+) as a cofactor. In terms of tissue distribution, ubiquitous. Up-regulated by 3,5,3'-triiodo-L-thyronine in the liver, kidney and heart.

It localises to the cytoplasm. The catalysed reaction is (S)-malate + NADP(+) = pyruvate + CO2 + NADPH. The enzyme catalyses oxaloacetate + H(+) = pyruvate + CO2. Catalyzes the oxidative decarboxylation of (S)-malate in the presence of NADP(+) and divalent metal ions, and decarboxylation of oxaloacetate. This chain is NADP-dependent malic enzyme (Me1), found in Rattus norvegicus (Rat).